The sequence spans 156 residues: Transcription elongation factor GreA (156 aa).

A coiled-coil region spans residues 1-32 (MKKVRLTREGYEKLKKELEDLKRKFMYEISER).

Belongs to the GreA/GreB family.

In terms of biological role, necessary for efficient RNA polymerase transcription elongation past template-encoded arresting sites. The arresting sites in DNA have the property of trapping a certain fraction of elongating RNA polymerases that pass through, resulting in locked ternary complexes. Cleavage of the nascent transcript by cleavage factors such as GreA or GreB allows the resumption of elongation from the new 3'terminus. GreA releases sequences of 2 to 3 nucleotides. The sequence is that of Transcription elongation factor GreA from Thermotoga petrophila (strain ATCC BAA-488 / DSM 13995 / JCM 10881 / RKU-1).